Consider the following 880-residue polypeptide: Valine--tRNA ligase (880 aa).

The 'HIGH' region motif lies at 49 to 59 (PNVTGKLHLGH). A 'KMSKS' region motif is present at residues 525-529 (KMSKS). Position 528 (Lys-528) interacts with ATP. Positions 809 to 880 (LEGLINIEEE…VKARLAELKR (72 aa)) form a coiled coil.

It belongs to the class-I aminoacyl-tRNA synthetase family. ValS type 1 subfamily. Monomer.

The protein resides in the cytoplasm. The enzyme catalyses tRNA(Val) + L-valine + ATP = L-valyl-tRNA(Val) + AMP + diphosphate. Functionally, catalyzes the attachment of valine to tRNA(Val). As ValRS can inadvertently accommodate and process structurally similar amino acids such as threonine, to avoid such errors, it has a 'posttransfer' editing activity that hydrolyzes mischarged Thr-tRNA(Val) in a tRNA-dependent manner. This Geobacillus kaustophilus (strain HTA426) protein is Valine--tRNA ligase.